We begin with the raw amino-acid sequence, 257 residues long: Protein patched homolog 1 (257 aa).

The Extracellular portion of the chain corresponds to 1 to 199 (AKLQTGTAYL…LDDILKSFSD (199 aa)). Asn-75, Asn-114, and Asn-177 each carry an N-linked (GlcNAc...) asparagine glycan. A helical transmembrane segment spans residues 200–220 (ISVIRVASGYLLMLAYACLTM). One can recognise an SSD domain in the interval 201-257 (SVIRVASGYLLMLAYACLTMLRWDCAKSQGAVGLAGVLLVALSVAAGLGLCSLIGIS). Residues 221–235 (LRWDCAKSQGAVGLA) lie on the Cytoplasmic side of the membrane. The helical transmembrane segment at 236–256 (GVLLVALSVAAGLGLCSLIGI) threads the bilayer.

It belongs to the patched family. Glycosylation is necessary for SHH binding. In the eye, detected in neural retina, iris, retinal pigment epithelium, but not in lens.

Its subcellular location is the membrane. Functionally, acts as a receptor for sonic hedgehog (SHH), indian hedgehog (IHH) and desert hedgehog (DHH). Associates with the smoothened protein (SMO) to transduce the hedgehog's proteins signal. In Cynops pyrrhogaster (Japanese fire-bellied newt), this protein is Protein patched homolog 1 (PTC1).